The chain runs to 86 residues: Acyl carrier protein (86 aa).

Positions 5–80 (EEILKKVQSI…EAVEFIIDKI (76 aa)) constitute a Carrier domain. At Ser40 the chain carries O-(pantetheine 4'-phosphoryl)serine.

The protein belongs to the acyl carrier protein (ACP) family. Post-translationally, 4'-phosphopantetheine is transferred from CoA to a specific serine of apo-ACP by AcpS. This modification is essential for activity because fatty acids are bound in thioester linkage to the sulfhydryl of the prosthetic group.

Its subcellular location is the plastid. It localises to the chloroplast. It participates in lipid metabolism; fatty acid biosynthesis. Carrier of the growing fatty acid chain in fatty acid biosynthesis. This is Acyl carrier protein from Cyanidium caldarium (Red alga).